The chain runs to 85 residues: uncharacterized protein (85 aa).

The protein belongs to the herpesviridae UL91 family.

This is an uncharacterized protein from Alcelaphine herpesvirus 1 (strain C500) (AlHV-1).